Consider the following 291-residue polypeptide: MAGSLSEIKAKIISTEKTSKITSAMRMVSSAKLVKSEQAARDFQIYASKIRQITTDLLKSDLTTGSDNPMLVSRPVKKTGYIVITSDKGLVGGYNSKILKSIMDMIQEYHAAGDYEIISIGSIGSDFFKARGMNVAFELRGLADQPSFDQVGRIISQSVGMFVNEIFDELYVCYNHHVNSLTSQVRVQRMLPISDLVAEEAAEEGVTGFELEPNRHVILEQLLPQFTESLIYGAIIDAKTAEHAAGMTAMQTATDNAKHVINDLTIQYNRARQAAITQEITEIVAGANALE.

It belongs to the ATPase gamma chain family. F-type ATPases have 2 components, CF(1) - the catalytic core - and CF(0) - the membrane proton channel. CF(1) has five subunits: alpha(3), beta(3), gamma(1), delta(1), epsilon(1). CF(0) has three main subunits: a, b and c.

It is found in the cell membrane. In terms of biological role, produces ATP from ADP in the presence of a proton gradient across the membrane. The gamma chain is believed to be important in regulating ATPase activity and the flow of protons through the CF(0) complex. In Streptococcus equi subsp. equi (strain 4047), this protein is ATP synthase gamma chain.